A 108-amino-acid chain; its full sequence is DNA-directed RNA polymerase subunit omega (108 aa).

The protein belongs to the RNA polymerase subunit omega family. The RNAP catalytic core consists of 2 alpha, 1 beta, 1 beta' and 1 omega subunit. When a sigma factor is associated with the core the holoenzyme is formed, which can initiate transcription.

It catalyses the reaction RNA(n) + a ribonucleoside 5'-triphosphate = RNA(n+1) + diphosphate. Functionally, promotes RNA polymerase assembly. Latches the N- and C-terminal regions of the beta' subunit thereby facilitating its interaction with the beta and alpha subunits. This Mycolicibacterium paratuberculosis (strain ATCC BAA-968 / K-10) (Mycobacterium paratuberculosis) protein is DNA-directed RNA polymerase subunit omega.